Consider the following 306-residue polypeptide: Esterase tropF (306 aa).

Active-site charge relay system residues include Ser-147, Asp-248, and His-276.

The protein belongs to the LovG family.

The protein operates within secondary metabolite biosynthesis. Esterase; part of the gene cluster that mediates the biosynthesis of the tropolone class of fungal maleic anhydrides. The pathway begins with the synthesis of 3-methylorcinaldehyde by the non-reducing polyketide synthase (PKS) tropA. 3-methylorcinaldehyde is the substrate for the FAD-dependent monooxygenase tropB to yield a dearomatized hydroxycyclohexadione. The 2-oxoglutarate-dependent dioxygenase tropC then performs the oxidative ring expansion to provide the first tropolone metabolite stipitaldehyde. Trop D converts stipitaldehyde into stipitacetal which is in turn converted to stipitalide by the short-chain dehydrogenase/reductase tropE. The next steps involve tropF, tropG, tropH, tropI and tropJ to form successive tropolone maleic anhydrides including stipitaldehydic, stipitatonic and stipitatic acids. The polypeptide is Esterase tropF (Talaromyces stipitatus (strain ATCC 10500 / CBS 375.48 / QM 6759 / NRRL 1006) (Penicillium stipitatum)).